The chain runs to 74 residues: MSAEEGTGDSTTAEVIEVVGKTGMHGEAMQVKCRIQEGSNQGRIITRNVLGPVRMGDVLQLRETQRDADSIGGR.

Belongs to the eukaryotic ribosomal protein eS28 family.

The sequence is that of Small ribosomal subunit protein eS28 from Halorubrum lacusprofundi (strain ATCC 49239 / DSM 5036 / JCM 8891 / ACAM 34).